Here is a 127-residue protein sequence, read N- to C-terminus: Aspartate 1-decarboxylase (127 aa).

Ser-25 (schiff-base intermediate with substrate; via pyruvic acid) is an active-site residue. Ser-25 bears the Pyruvic acid (Ser) mark. Thr-57 lines the substrate pocket. The Proton donor role is filled by Tyr-58. 73 to 75 (GAA) provides a ligand contact to substrate.

It belongs to the PanD family. In terms of assembly, heterooctamer of four alpha and four beta subunits. Pyruvate is required as a cofactor. Is synthesized initially as an inactive proenzyme, which is activated by self-cleavage at a specific serine bond to produce a beta-subunit with a hydroxyl group at its C-terminus and an alpha-subunit with a pyruvoyl group at its N-terminus.

It localises to the cytoplasm. It catalyses the reaction L-aspartate + H(+) = beta-alanine + CO2. It functions in the pathway cofactor biosynthesis; (R)-pantothenate biosynthesis; beta-alanine from L-aspartate: step 1/1. In terms of biological role, catalyzes the pyruvoyl-dependent decarboxylation of aspartate to produce beta-alanine. The chain is Aspartate 1-decarboxylase from Clostridium botulinum (strain 657 / Type Ba4).